The primary structure comprises 378 residues: MDSPQVARTLVDSAGGTAAHTREAIRQIGVPETAAFLADELAGRTETVTIRHAAEVQFVFDDRYAPDAADPVPWTFRVGPEGVTHRAGALPDPGAVVTQDLTELARSLYGPAADRSDATRTVWWRDHDDPRVYFDPPPVFPAVERLLAAADGRDVPGLAGLALRHGSDKWGIHTYTAAYEQHFAPFRDRAVTVVEIGVGGYDDPAAGGGSLRMWKRYFRRGLVYGVDIADKSRHREPRVHTVVADQSDPASLRDLADAIGPIDIVIDDGSHISAHVVTAFSTLFPRLNPGGLYVVEDLQTSYWPAFQGAYDDDTRTSVGFLKRLVDGLHHAEYPSRAGRPAQPTDRTVGSLHFHPNLAFVEKRANSGHGGISRLREAT.

S-adenosyl-L-methionine-binding positions include glutamate 195–tyrosine 201, serine 210, aspartate 227, aspartate 245–glutamine 246, and aspartate 268. Aspartate 268 is a Mg(2+) binding site. Residue histidine 271 is the Proton acceptor of the active site. Mg(2+) is bound by residues glutamate 296 and aspartate 297.

It belongs to the methyltransferase OleY/MycE family. Requires Mg(2+) as cofactor.

It catalyses the reaction 8-demethyl-8-alpha-L-rhamnosyl-tetracenomycin C + S-adenosyl-L-methionine = 8-demethyl-8-(2-O-methyl-alpha-L-rhamnosyl)-tetracenomycin C + S-adenosyl-L-homocysteine + H(+). It participates in antibiotic biosynthesis. Its function is as follows. O-methyltransferase involved in the biosynthesis of the permethylated L-rhamnose moiety of elloramycin, an antitumor polyketide. Mediates the methylation of the hydroxy groups at the 2'-position after the sugar moiety has been attached to the aglycon. The protein is 8-demethyl-8-alpha-L-rhamnosyl tetracenomycin-C 2'-O-methyltransferase of Streptomyces olivaceus.